The chain runs to 505 residues: Apolipoprotein N-acyltransferase (505 aa).

A run of 6 helical transmembrane segments spans residues 15–46 (AAFVGVITPLAFAPYQFWPLALLSPFILLLLL), 55–75 (ALIAYLWGIGQFAVGISWVHV), 89–109 (LFLMTLLVGYLALYPSLFGWL), 129–149 (LWLITDWLRGWVMTGFPWLWL), 161–181 (FAPIGGVELITLLLLFCAGSL), and 192–212 (MACIPLVVYATGYGLQAMQWV). Positions 225 to 471 (IQGNIEQGLK…TGVLKATVTP (247 aa)) constitute a CN hydrolase domain. Glu264 serves as the catalytic Proton acceptor. The active site involves Lys330. The Nucleophile role is filled by Cys382. A helical membrane pass occupies residues 479–499 (FLWGTTPLYLWVGLAAGFAFW).

This sequence belongs to the CN hydrolase family. Apolipoprotein N-acyltransferase subfamily.

It is found in the cell inner membrane. The enzyme catalyses N-terminal S-1,2-diacyl-sn-glyceryl-L-cysteinyl-[lipoprotein] + a glycerophospholipid = N-acyl-S-1,2-diacyl-sn-glyceryl-L-cysteinyl-[lipoprotein] + a 2-acyl-sn-glycero-3-phospholipid + H(+). The protein operates within protein modification; lipoprotein biosynthesis (N-acyl transfer). Its function is as follows. Catalyzes the phospholipid dependent N-acylation of the N-terminal cysteine of apolipoprotein, the last step in lipoprotein maturation. The chain is Apolipoprotein N-acyltransferase from Vibrio cholerae serotype O1 (strain ATCC 39315 / El Tor Inaba N16961).